The sequence spans 511 residues: Exodeoxyribonuclease 7 large subunit (511 aa).

This sequence belongs to the XseA family. Heterooligomer composed of large and small subunits.

The protein resides in the cytoplasm. The catalysed reaction is Exonucleolytic cleavage in either 5'- to 3'- or 3'- to 5'-direction to yield nucleoside 5'-phosphates.. In terms of biological role, bidirectionally degrades single-stranded DNA into large acid-insoluble oligonucleotides, which are then degraded further into small acid-soluble oligonucleotides. In Brucella ovis (strain ATCC 25840 / 63/290 / NCTC 10512), this protein is Exodeoxyribonuclease 7 large subunit.